Consider the following 465-residue polypeptide: VGFKAGVKDYKLTYYTPDYETKDTDILAAFRVTPQPGVPPEEAGAAVAAESSTGTWTTVWTDGLTSLDRYKGRCYHIEPVPGEESQFIAYVAYPLDLFEEGSVTNMFTSIVGNVFGFKALRALRLEDLRIPPAYTKTFWGPPHGIQVERDKLNKYGRPLLGCTIKPKLGLSAKNYGRAVYECLRGGLDFTKDDENVNSQPFMRWRDRFLFCAEAIFKAQAETGEIKGHYLNATAGTCEEMMKRAVFARELGVPIIMHDYLTGGFTANTSLAHYCRDNGLLLHIHRAMHAVIDRQKNHGMHFRVLAKALRMSGGDHIHAGTVVGKLEGERDITLGFVDLLRDDFVEKDRSRGIFFTQDWVSLAGVLPVASGGIHVWHMPALTEIFGDDSVLQFGGGTLGHPWGNAPGAVANRVALEACVQARNEGRDLAREGNEIIEEASKWSPELAAACAIWKKIKFEFEPVDTI.

At Lys-4 the chain carries N6,N6,N6-trimethyllysine. Positions 113 and 163 each coordinate substrate. The active-site Proton acceptor is Lys-165. Residue Lys-167 coordinates substrate. Residues Lys-191, Asp-193, and Glu-194 each contribute to the Mg(2+) site. Residue Lys-191 is modified to N6-carboxylysine. The Proton acceptor role is filled by His-284. Residues Arg-285, His-317, and Ser-369 each contribute to the substrate site.

The protein belongs to the RuBisCO large chain family. Type I subfamily. In terms of assembly, heterohexadecamer of 8 large chains and 8 small chains; disulfide-linked. The disulfide link is formed within the large subunit homodimers. It depends on Mg(2+) as a cofactor. The disulfide bond which can form in the large chain dimeric partners within the hexadecamer appears to be associated with oxidative stress and protein turnover.

The protein localises to the plastid. It is found in the chloroplast. The catalysed reaction is 2 (2R)-3-phosphoglycerate + 2 H(+) = D-ribulose 1,5-bisphosphate + CO2 + H2O. It catalyses the reaction D-ribulose 1,5-bisphosphate + O2 = 2-phosphoglycolate + (2R)-3-phosphoglycerate + 2 H(+). Functionally, ruBisCO catalyzes two reactions: the carboxylation of D-ribulose 1,5-bisphosphate, the primary event in carbon dioxide fixation, as well as the oxidative fragmentation of the pentose substrate in the photorespiration process. Both reactions occur simultaneously and in competition at the same active site. This is Ribulose bisphosphate carboxylase large chain from Dillenia indica (Elephant apple).